We begin with the raw amino-acid sequence, 97 residues long: UPF0235 protein HD_0778 (97 aa).

Belongs to the UPF0235 family.

The chain is UPF0235 protein HD_0778 from Haemophilus ducreyi (strain 35000HP / ATCC 700724).